Here is a 257-residue protein sequence, read N- to C-terminus: MLVPLILTLLAGAATFIGAFLGVLGQKPSNRVLAFSLGFAAGIMLLISLMEMLPAALDTEGMSPVLGYGMFIIGLLGYFGLDRLLPHAHPQDLMQKRQQPLPGSIKRTAILLTLGISLHNFPEGIATFVTASSNLELGFGIALAVALHNIPEGLAVAGPVYAATGSKRTAIFWAGISGMAEILGGVLAWLILGSLVSPIVMAAIMAAVAGIMVALSVDELMPLAKEIDPNNNPSYGVLCGMSIMGLSLVILQTIGIG.

A run of 8 helical transmembrane segments spans residues 5–25 (LILT…GVLG), 32–52 (VLAF…LMEM), 61–81 (GMSP…YFGL), 109–129 (AILL…ATFV), 137–157 (LGFG…LAVA), 171–191 (IFWA…AWLI), 195–215 (LVSP…MVAL), and 236–256 (GVLC…TIGI). The Fe(2+) site is built by N120 and E123. E123 and H148 together coordinate Zn(2+). Fe(2+)-binding residues include N149, E152, and E181. E152 contributes to the Zn(2+) binding site.

It belongs to the ZIP transporter (TC 2.A.5) family. ZupT subfamily.

The protein resides in the cell inner membrane. The enzyme catalyses Zn(2+)(in) = Zn(2+)(out). Its function is as follows. Mediates zinc uptake. May also transport other divalent cations. The sequence is that of Zinc transporter ZupT from Salmonella heidelberg (strain SL476).